The chain runs to 232 residues: 2-C-methyl-D-erythritol 4-phosphate cytidylyltransferase (232 aa).

The protein belongs to the IspD/TarI cytidylyltransferase family. IspD subfamily.

It carries out the reaction 2-C-methyl-D-erythritol 4-phosphate + CTP + H(+) = 4-CDP-2-C-methyl-D-erythritol + diphosphate. It participates in isoprenoid biosynthesis; isopentenyl diphosphate biosynthesis via DXP pathway; isopentenyl diphosphate from 1-deoxy-D-xylulose 5-phosphate: step 2/6. Catalyzes the formation of 4-diphosphocytidyl-2-C-methyl-D-erythritol from CTP and 2-C-methyl-D-erythritol 4-phosphate (MEP). The chain is 2-C-methyl-D-erythritol 4-phosphate cytidylyltransferase from Nitrosospira multiformis (strain ATCC 25196 / NCIMB 11849 / C 71).